The sequence spans 93 residues: DNA/RNA-binding protein Alba 2 (93 aa).

This sequence belongs to the histone-like Alba family.

The protein resides in the cytoplasm. The protein localises to the chromosome. In terms of biological role, binds double-stranded DNA tightly but without sequence specificity. Involved in DNA compaction. The polypeptide is DNA/RNA-binding protein Alba 2 (Methanopyrus kandleri (strain AV19 / DSM 6324 / JCM 9639 / NBRC 100938)).